The primary structure comprises 211 residues: Histidine biosynthesis bifunctional protein HisIE (211 aa).

A phosphoribosyl-AMP cyclohydrolase region spans residues 1 to 122 (MSFKAAEVSS…DAQEESQMVW (122 aa)). The interval 123–211 (LHQLEQLLAA…VVNKLKERHK (89 aa)) is phosphoribosyl-ATP pyrophosphohydrolase.

It in the N-terminal section; belongs to the PRA-CH family. The protein in the C-terminal section; belongs to the PRA-PH family.

It is found in the cytoplasm. The catalysed reaction is 1-(5-phospho-beta-D-ribosyl)-ATP + H2O = 1-(5-phospho-beta-D-ribosyl)-5'-AMP + diphosphate + H(+). The enzyme catalyses 1-(5-phospho-beta-D-ribosyl)-5'-AMP + H2O = 1-(5-phospho-beta-D-ribosyl)-5-[(5-phospho-beta-D-ribosylamino)methylideneamino]imidazole-4-carboxamide. It functions in the pathway amino-acid biosynthesis; L-histidine biosynthesis; L-histidine from 5-phospho-alpha-D-ribose 1-diphosphate: step 2/9. Its pathway is amino-acid biosynthesis; L-histidine biosynthesis; L-histidine from 5-phospho-alpha-D-ribose 1-diphosphate: step 3/9. This Vibrio parahaemolyticus serotype O3:K6 (strain RIMD 2210633) protein is Histidine biosynthesis bifunctional protein HisIE.